Reading from the N-terminus, the 499-residue chain is Low-affinity inorganic phosphate transporter PitB (499 aa).

10 helical membrane passes run 5–25 (FVGL…FVLF), 52–72 (LAVV…GLSV), 94–114 (LAMV…TWFF), 124–144 (LIGA…SSVM), 155–175 (IFSS…GLIF), 207–227 (PFWT…SHGA), 233–253 (GIGL…VVNM), 382–402 (APVW…MIGW), 430–450 (AAVS…THVL), and 473–493 (ILMA…GLYW).

The protein belongs to the inorganic phosphate transporter (PiT) (TC 2.A.20) family. Pit subfamily.

It localises to the cell inner membrane. It catalyses the reaction phosphate(in) + H(+)(in) = phosphate(out) + H(+)(out). Functionally, low-affinity inorganic phosphate transporter. The polypeptide is Low-affinity inorganic phosphate transporter PitB (Escherichia coli (strain K12)).